Reading from the N-terminus, the 370-residue chain is MKYLPLYPILARYPFLRIASRVFSFNIEDELRKFLDTVEAAKRIVDKAIDGRVEYDRFTDESEFFCLGCEENCYDCQKRGTLEGCDLCMGCFENCSLYYPREAVERFYTNAKLSLLTYIASRMIVSAMEDWVRMRYAVNEASYYSRLLREDVEESGKEPIVRLVAIDLGAKLKGWKMHVSTFVRVSARIKDDKWRLVNRKLRNGWVETTKAEVLRGLEELLRMKLFEKVPVSEAVSEAVRELSRKAKRESEKFAMDLGEVDLNCLPPCMREILSELQRGMNIPHTARFAITSFLLNIGMTVDEIIALFKSAPDFDDEKTRYQVEHIAGERGKGAEYTSPSCDTMRTYSNCVADCRVSHPLIYYKKCKSKS.

[4Fe-4S] cluster contacts are provided by cysteine 268, cysteine 341, cysteine 350, and cysteine 354.

This sequence belongs to the eukaryotic-type primase large subunit family. In terms of assembly, heterodimer of a small subunit (PriS) and a large subunit (PriL). [4Fe-4S] cluster is required as a cofactor.

Regulatory subunit of DNA primase, an RNA polymerase that catalyzes the synthesis of short RNA molecules used as primers for DNA polymerase during DNA replication. Stabilizes and modulates the activity of the small subunit, increasing the rate of DNA synthesis, and conferring RNA synthesis capability. The DNA polymerase activity may enable DNA primase to also catalyze primer extension after primer synthesis. May also play a role in DNA repair. This chain is DNA primase large subunit PriL, found in Archaeoglobus fulgidus (strain ATCC 49558 / DSM 4304 / JCM 9628 / NBRC 100126 / VC-16).